The following is a 431-amino-acid chain: 23S rRNA (uracil(1939)-C(5))-methyltransferase RlmD (431 aa).

One can recognise a TRAM domain in the interval 10–68; it reads RVTTRQIITVKVNDLDSFGQGVARHNGKALFIPGLLPEESAEVIITEDKKQFARARVSR. [4Fe-4S] cluster is bound by residues Cys-81, Cys-87, Cys-90, and Cys-161. Residues Gln-264, Phe-293, Asn-298, Glu-314, Asn-341, and Asp-362 each coordinate S-adenosyl-L-methionine. The active-site Nucleophile is Cys-388.

The protein belongs to the class I-like SAM-binding methyltransferase superfamily. RNA M5U methyltransferase family. RlmD subfamily.

The enzyme catalyses uridine(1939) in 23S rRNA + S-adenosyl-L-methionine = 5-methyluridine(1939) in 23S rRNA + S-adenosyl-L-homocysteine + H(+). Functionally, catalyzes the formation of 5-methyl-uridine at position 1939 (m5U1939) in 23S rRNA. This chain is 23S rRNA (uracil(1939)-C(5))-methyltransferase RlmD, found in Salmonella choleraesuis (strain SC-B67).